The sequence spans 348 residues: MTIAPEGRRMLRVEARNSQTPIETKPRWIRNQVKNGPEYKDMKERVAGASLHTVCQEAGCPNIHECWESREATFLIGGANCSRRCDFCMINSARPEPLDRGEPLRVAESVREMRLNYSTITGVTRDDLPDEGAWLYSEVVRKIHELNPNTGVENLVPDFSGKRDLLQEVFESRPEVFAHNLETVPRIFKRIRPAFRYDRSLDVIRQARDFGLVTKSNLILGMGETREEISEALRDLHSAGTDIITITQYLRPGPLFHPIERWVKPEEFLELSDEAYEIGFAAVMSGPLVRSSYRAGKLYAQALKFRGEELPANLSHLAETTEGPTTQEASSLLERYGASEDAPVIPRG.

Cysteine 55, cysteine 60, cysteine 66, cysteine 81, cysteine 85, cysteine 88, and serine 292 together coordinate [4Fe-4S] cluster. The region spanning 67 to 281 is the Radical SAM core domain; the sequence is WESREATFLI…SDEAYEIGFA (215 aa).

Belongs to the radical SAM superfamily. Lipoyl synthase family. It depends on [4Fe-4S] cluster as a cofactor.

The protein resides in the cytoplasm. The catalysed reaction is [[Fe-S] cluster scaffold protein carrying a second [4Fe-4S](2+) cluster] + N(6)-octanoyl-L-lysyl-[protein] + 2 oxidized [2Fe-2S]-[ferredoxin] + 2 S-adenosyl-L-methionine + 4 H(+) = [[Fe-S] cluster scaffold protein] + N(6)-[(R)-dihydrolipoyl]-L-lysyl-[protein] + 4 Fe(3+) + 2 hydrogen sulfide + 2 5'-deoxyadenosine + 2 L-methionine + 2 reduced [2Fe-2S]-[ferredoxin]. It participates in protein modification; protein lipoylation via endogenous pathway; protein N(6)-(lipoyl)lysine from octanoyl-[acyl-carrier-protein]: step 2/2. Functionally, catalyzes the radical-mediated insertion of two sulfur atoms into the C-6 and C-8 positions of the octanoyl moiety bound to the lipoyl domains of lipoate-dependent enzymes, thereby converting the octanoylated domains into lipoylated derivatives. The polypeptide is Lipoyl synthase (Corynebacterium efficiens (strain DSM 44549 / YS-314 / AJ 12310 / JCM 11189 / NBRC 100395)).